A 100-amino-acid chain; its full sequence is Urease subunit gamma (100 aa).

The protein belongs to the urease gamma subunit family. Heterotrimer of UreA (gamma), UreB (beta) and UreC (alpha) subunits. Three heterotrimers associate to form the active enzyme.

The protein localises to the cytoplasm. It carries out the reaction urea + 2 H2O + H(+) = hydrogencarbonate + 2 NH4(+). Its pathway is nitrogen metabolism; urea degradation; CO(2) and NH(3) from urea (urease route): step 1/1. This chain is Urease subunit gamma, found in Prochlorococcus marinus (strain MIT 9215).